The chain runs to 493 residues: Signal recognition particle subunit SRP54 3 (493 aa).

Residues 1 to 294 are G-domain; the sequence is MVLADVGGSI…NVEPFVARLL (294 aa). GTP-binding positions include 107–114, 189–193, and 247–250; these read GLQGSGKT, DTSGR, and TKLD. An M-domain region spans residues 295–493; sequence GRGDLPGLID…KMLAGMRGGA (199 aa).

The protein belongs to the GTP-binding SRP family. SRP54 subfamily. As to quaternary structure, component of a signal recognition particle (SRP) complex that consists of a 7SL RNA molecule of 300 nucleotides and six protein subunits: SRP72, SRP68, SRP54, SRP19, SRP14 and SRP9.

It is found in the cytoplasm. It localises to the endoplasmic reticulum. The catalysed reaction is GTP + H2O = GDP + phosphate + H(+). In terms of biological role, component of the signal recognition particle (SRP) complex, a ribonucleoprotein complex that mediates the cotranslational targeting of secretory and membrane proteins to the endoplasmic reticulum (ER). As part of the SRP complex, associates with the SRP receptor (SR) component SRPRA to target secretory proteins to the endoplasmic reticulum membrane. Binds to the signal sequence of presecretory proteins when they emerge from the ribosomes. Displays basal GTPase activity, and stimulates reciprocal GTPase activation of the SR subunit SRPRA. Forms a guanosine 5'-triphosphate (GTP)-dependent complex with the SR subunit SRPRA. SR compaction and GTPase mediated rearrangement of SR drive SRP-mediated cotranslational protein translocation into the ER. Requires the presence of SRP9/SRP14 and/or SRP19 to stably interact with RNA. The protein is Signal recognition particle subunit SRP54 3 (SRP54-3) of Hordeum vulgare (Barley).